A 79-amino-acid chain; its full sequence is Spidroin-1 (79 aa).

It belongs to the silk fibroin family. As to quaternary structure, major subunit, with spidroin 2, of the dragline silk.

Its subcellular location is the secreted. It is found in the extracellular space. In terms of biological role, spiders' major ampullate silk possesses unique characteristics of strength and elasticity. Fibroin consists of pseudocrystalline regions of antiparallel beta-sheet interspersed with elastic amorphous segments. This chain is Spidroin-1, found in Araneus bicentenarius (Giant lichen orbweaver).